The following is a 535-amino-acid chain: Light-independent protochlorophyllide reductase subunit B (535 aa).

Aspartate 36 is a [4Fe-4S] cluster binding site. The Proton donor role is filled by aspartate 287. 422-423 (GL) lines the substrate pocket.

Belongs to the ChlB/BchB/BchZ family. As to quaternary structure, protochlorophyllide reductase is composed of three subunits; BchL, BchN and BchB. Forms a heterotetramer of two BchB and two BchN subunits. [4Fe-4S] cluster serves as cofactor.

It carries out the reaction chlorophyllide a + oxidized 2[4Fe-4S]-[ferredoxin] + 2 ADP + 2 phosphate = protochlorophyllide a + reduced 2[4Fe-4S]-[ferredoxin] + 2 ATP + 2 H2O. It participates in porphyrin-containing compound metabolism; bacteriochlorophyll biosynthesis (light-independent). Component of the dark-operative protochlorophyllide reductase (DPOR) that uses Mg-ATP and reduced ferredoxin to reduce ring D of protochlorophyllide (Pchlide) to form chlorophyllide a (Chlide). This reaction is light-independent. The NB-protein (BchN-BchB) is the catalytic component of the complex. The polypeptide is Light-independent protochlorophyllide reductase subunit B (Rhodopseudomonas palustris (strain BisB5)).